We begin with the raw amino-acid sequence, 118 residues long: UPF0342 protein BT9727_0768 (118 aa).

It belongs to the UPF0342 family.

The chain is UPF0342 protein BT9727_0768 from Bacillus thuringiensis subsp. konkukian (strain 97-27).